The chain runs to 193 residues: PBAN-type neuropeptides (193 aa).

A signal peptide spans 1 to 19 (MYGAVLPGLFFIFISCVVA). Isoleucine amide is present on isoleucine 46. Residues leucine 102 and leucine 122 each carry the leucine amide modification. The tract at residues 124-158 (RRLADDTPATPADQEMYRPDPEQIDSRTKYFSPRL) is disordered. The segment covering 138–151 (EMYRPDPEQIDSRT) has biased composition (basic and acidic residues). Residues leucine 158 and leucine 168 each carry the leucine amide modification. The propeptide occupies 186 to 193 (STNKTQST).

The protein belongs to the pyrokinin family. In terms of tissue distribution, expressed in the mandibular, maxillary and labial neuromeres of the male and female brain-subesophageal ganglions, in the corpora cardiaca and all around the corpora allata, and at a lower level in the brain near the calyx and pedunculus of the mushroom body (at protein level). Expressed in larvae and adult of both sexes (at protein level). Expressed in corpora cardiaca (CC), corpora allata (CA) and gnathal ganglion (GNG) (at protein level). Expression in CC and CA detected in most animals, in GNG in some (at protein level). As to expression, expression not detected in CC, CA, AL or GNG (at protein level). In terms of tissue distribution, expressed in corpora cardiaca (CC), corpora allata (CA), antennal lobe (AL) and gnathal ganglion (GNG) (at protein level). Expression in CC, CA and GNG detected in most animals, expression in AL detected in few (at protein level). Expressed in corpora cardiaca (CC), corpora allata (CA), antennal lobe (AL) and gnathal ganglion (GNG) (at protein level). Expression in CC, CA and GNG detected in all animals, expression in AL detected in some (at protein level). As to expression, expressed in corpora cardiaca (CC), corpora allata (CA), antennal lobe (AL) and gnathal ganglion (GNG) (at protein level). Expression in CC, CA and GNG detected in most animals, expression in AL detected in some animals (at protein level).

The protein localises to the secreted. In terms of biological role, a hormone that controls sex pheromone production in female moths and pheromone responsiveness in male. The polypeptide is PBAN-type neuropeptides (Agrotis ipsilon (Black cutworm moth)).